Here is a 233-residue protein sequence, read N- to C-terminus: Large ribosomal subunit protein uL1 (233 aa).

This sequence belongs to the universal ribosomal protein uL1 family. Part of the 50S ribosomal subunit.

In terms of biological role, binds directly to 23S rRNA. The L1 stalk is quite mobile in the ribosome, and is involved in E site tRNA release. Functionally, protein L1 is also a translational repressor protein, it controls the translation of the L11 operon by binding to its mRNA. This Proteus mirabilis (strain HI4320) protein is Large ribosomal subunit protein uL1.